The primary structure comprises 419 residues: Bilin biosynthesis protein CpeY (419 aa).

Functionally, involved in the biosynthesis of bilin. The polypeptide is Bilin biosynthesis protein CpeY (cpeY) (Synechococcus sp. (strain WH8020)).